The sequence spans 79 residues: Ubiquinol-cytochrome c reductase complex assembly factor 5 (79 aa).

Topologically, residues 1–20 are mitochondrial matrix; that stretch reads MSPYSGSVRRLLDSWPGKKR. A helical membrane pass occupies residues 21-43; it reads FGVYRFLPLFFLLGAGLEFSMIN. Over 44–79 the chain is Mitochondrial intermembrane; it reads WTVGETNFYRTFKRRQAKNYVEEQQHLQARAANNTN.

This sequence belongs to the UQCC5 family. As to quaternary structure, interacts with respiratory complex III components Uqcc1 and RFeSP; the interactions are probably involved in the assembly and stability of the mitochondrial ubiquinol-cytochrome c reductase complex. Interacts with sloth2; the interaction stabilizes both components. As to expression, expressed in the brain.

The protein localises to the mitochondrion inner membrane. It is found in the mitochondrion. In terms of biological role, required for the assembly and stability of the mitochondrial ubiquinol-cytochrome c reductase complex (complex III (CIII) or cytochrome b-c1 complex), a multisubunit transmembrane complex that is part of the mitochondrial electron transport chain (ETC) which drives oxidative phosphorylation. The polypeptide is Ubiquinol-cytochrome c reductase complex assembly factor 5 (Drosophila melanogaster (Fruit fly)).